The primary structure comprises 554 residues: Acetyl-S-ACP:malonate ACP transferase (554 aa).

Its subcellular location is the cytoplasm. The catalysed reaction is acetyl-[ACP] + malonate = malonyl-[ACP] + acetate. In terms of biological role, alpha subunit of the biotin-independent and biotin-dependent malonate decarboxylase multienzyme complex (EC 4.1.1.88 and EC 7.2.4.4, respectively). Acts as an acyl-carrier protein (ACP) transferase component. This first step in malonate decarboxylation involves the exchange of an acetyl thioester residue bound to the activated ACP subunit for a malonyl thioester residue. Has a weak activity with acetyl-CoA as substrate. This is Acetyl-S-ACP:malonate ACP transferase (madA) from Malonomonas rubra.